Consider the following 517-residue polypeptide: MGRLVLLSVSDKTGLIELARQLVEEFEFEIISSGGTAKSLQDAGIPVIKVGDYTGSPEILGGRVKTLHPRIHGGILARRDVPQDLKDLDANNIRPLDLVVVNLYPFEQTIAKDNVTVAQAIEQIDIGGPAMLRATAKNFAHLTVLCNPKYYQPYLEELRQHNGETSLAFRQKMAGETFALTNAYDQAIASYFASLTPEATENPLPTRFSVAGLELQSLRYGENPHQSASWYQSGTQPTGWTAATKLQGKELSYNNLVDLEAARRIIVEFDRSEPSCAILKHTNPCGVAVGTTLAEAYNKAFNADSMSAFGGIVALNQPIDPETAKALTKTFLECVVAPGCDEEAQKILSAKSNVRVLILPDLRSGPKQTVKVIAGGLLVQASDDALDNPETWQVVTEKQPTPEMMAELLFGWKVAKHVKSNAIVVSKNRTTLGVGAGQMNRVGSVKIALETAGEAAKGGYLASDGFFPFDDSVRTAAAAGITGIIQPGGSLKDKDSIKAANELGLVMVLTGMRHFLH.

The region spanning methionine 1–cysteine 146 is the MGS-like domain.

This sequence belongs to the PurH family.

The catalysed reaction is (6R)-10-formyltetrahydrofolate + 5-amino-1-(5-phospho-beta-D-ribosyl)imidazole-4-carboxamide = 5-formamido-1-(5-phospho-D-ribosyl)imidazole-4-carboxamide + (6S)-5,6,7,8-tetrahydrofolate. The enzyme catalyses IMP + H2O = 5-formamido-1-(5-phospho-D-ribosyl)imidazole-4-carboxamide. It participates in purine metabolism; IMP biosynthesis via de novo pathway; 5-formamido-1-(5-phospho-D-ribosyl)imidazole-4-carboxamide from 5-amino-1-(5-phospho-D-ribosyl)imidazole-4-carboxamide (10-formyl THF route): step 1/1. It functions in the pathway purine metabolism; IMP biosynthesis via de novo pathway; IMP from 5-formamido-1-(5-phospho-D-ribosyl)imidazole-4-carboxamide: step 1/1. The protein is Bifunctional purine biosynthesis protein PurH of Gloeothece citriformis (strain PCC 7424) (Cyanothece sp. (strain PCC 7424)).